Consider the following 310-residue polypeptide: Thioredoxin reductase (310 aa).

An FAD-binding site is contributed by 35 to 42; sequence ERGMPGGQ. A disulfide bridge connects residues Cys134 and Cys137. FAD is bound at residue 277–286; the sequence is DVRDKGLRQI.

It belongs to the class-II pyridine nucleotide-disulfide oxidoreductase family. As to quaternary structure, homodimer. FAD is required as a cofactor.

Its subcellular location is the cytoplasm. It carries out the reaction [thioredoxin]-dithiol + NADP(+) = [thioredoxin]-disulfide + NADPH + H(+). This Staphylococcus epidermidis (strain ATCC 35984 / DSM 28319 / BCRC 17069 / CCUG 31568 / BM 3577 / RP62A) protein is Thioredoxin reductase (trxB).